The sequence spans 125 residues: Calcitonin gene-related peptide 1 (125 aa).

The first 25 residues, 1–25 (MVMLKISSFLAVYALVVCQMDSFQA), serve as a signal peptide directing secretion. A propeptide spanning residues 26–77 (APVRPGLESITDRVTLSDYEARRLLNALVKDFIQMTAEELEQASEGNSVTAQ) is cleaved from the precursor. A disulfide bond links Cys81 and Cys86. At Phe116 the chain carries Phenylalanine amide. A propeptide spanning residues 122–125 (SVQI) is cleaved from the precursor.

This sequence belongs to the calcitonin family.

The protein resides in the secreted. CGRP1/CALCA is a peptide hormone that induces vasodilation mediated by the CALCRL-RAMP1 receptor complex. Dilates a variety of vessels including the coronary, cerebral and systemic vasculature. Its abundance in the CNS also points toward a neurotransmitter or neuromodulator role. It also elevates platelet cAMP. CGRP1 can also bind and activate CALCR-RAMP1 (AMYR1) receptor complex. The chain is Calcitonin gene-related peptide 1 (CALCA) from Gallus gallus (Chicken).